The chain runs to 440 residues: 2-phosphinomethylmalate synthase (440 aa).

Residues 39–313 (VWLSETTHRD…GARVNLPAVN (275 aa)) enclose the Pyruvate carboxyltransferase domain.

Belongs to the alpha-IPM synthase/homocitrate synthase family. Homodimer. Mn(2+) serves as cofactor. Co(2+) is required as a cofactor.

It carries out the reaction 3-(hydrohydroxyphosphoryl)pyruvate + acetyl-CoA + H2O = phosphinomethylmalate + CoA + H(+). Its pathway is secondary metabolite biosynthesis; bialaphos biosynthesis. With respect to regulation, strongly inhibited by p-chloromercuribenzoate (pCMB), iodoacetamide (IA) and EDTA. Involved in the biosynthesis of phosphinothricin tripeptide (PTT), also known as bialaphos (BA), a natural-product antibiotic and potent herbicide. Catalyzes the condensation berween phosphinopyruvic acid (PPA), an analog of oxalacetic acid, and acetyl-CoA to form R-2-phosphinomethylmalic acid (PMM). Can also act on oxaloacetate, but shows no activity when acetyl-CoA is substituted by propionyl-CoA or butyryl-CoA. This chain is 2-phosphinomethylmalate synthase, found in Streptomyces hygroscopicus.